The sequence spans 206 residues: dCTP deaminase, dUMP-forming (206 aa).

Residues 117–122, Asp135, 143–145, Gln163, Tyr177, Lys184, and Gln188 contribute to the dCTP site; these read RSSFGR and TLE. Residue Glu145 is the Proton donor/acceptor of the active site.

The protein belongs to the dCTP deaminase family. As to quaternary structure, homotrimer.

The catalysed reaction is dCTP + 2 H2O = dUMP + NH4(+) + diphosphate. It participates in pyrimidine metabolism; dUMP biosynthesis; dUMP from dCTP: step 1/1. Functionally, bifunctional enzyme that catalyzes both the deamination of dCTP to dUTP and the hydrolysis of dUTP to dUMP without releasing the toxic dUTP intermediate. The sequence is that of dCTP deaminase, dUMP-forming from Methanococcus maripaludis (strain C6 / ATCC BAA-1332).